Consider the following 155-residue polypeptide: Cytochrome c-type biogenesis protein CcmE (155 aa).

At 1 to 7 (MTRKQKR) the chain is on the cytoplasmic side. Residues 8 to 28 (LVVIAGGMSFILAAVLLVMFA) traverse the membrane as a helical; Signal-anchor for type II membrane protein segment. The Periplasmic segment spans residues 29–155 (FSQSVAYFYM…GKGQEAKATP (127 aa)). 2 residues coordinate heme: histidine 124 and tyrosine 128.

This sequence belongs to the CcmE/CycJ family.

Its subcellular location is the cell inner membrane. Functionally, heme chaperone required for the biogenesis of c-type cytochromes. Transiently binds heme delivered by CcmC and transfers the heme to apo-cytochromes in a process facilitated by CcmF and CcmH. The polypeptide is Cytochrome c-type biogenesis protein CcmE (Rhizobium etli (strain ATCC 51251 / DSM 11541 / JCM 21823 / NBRC 15573 / CFN 42)).